The following is a 501-amino-acid chain: NAD(P)H-quinone oxidoreductase chain 4, chloroplastic (501 aa).

The next 14 helical transmembrane spans lie at 4–24, 35–55, 84–104, 111–129, 134–154, 168–188, 209–229, 243–263, 273–293, 306–326, 331–351, 387–407, 417–437, and 463–483; these read FPWL…ILFL, YTIC…CYHF, GLSI…TLAA, SRLL…IGSF, LLLF…LLSM, FILY…GMDL, ALEI…SPII, HYST…YGLI, AHSI…IYAA, IAYS…SITD, GAIL…FLAG, LALP…GIIT, ILIT…SLSM, and LFVS…PDFV.

The protein belongs to the complex I subunit 4 family.

The protein resides in the plastid. It is found in the chloroplast thylakoid membrane. It catalyses the reaction a plastoquinone + NADH + (n+1) H(+)(in) = a plastoquinol + NAD(+) + n H(+)(out). The catalysed reaction is a plastoquinone + NADPH + (n+1) H(+)(in) = a plastoquinol + NADP(+) + n H(+)(out). This chain is NAD(P)H-quinone oxidoreductase chain 4, chloroplastic, found in Buxus microphylla (Littleleaf boxwood).